Here is a 173-residue protein sequence, read N- to C-terminus: Lipoprotein signal peptidase (173 aa).

2 consecutive transmembrane segments (helical) span residues 67–87 (WISL…PHLG) and 92–112 (MGFG…FAFG). Catalysis depends on residues Asp116 and Asp132. Residues 125–145 (FPVFNGADIAINLGLACLLIG) traverse the membrane as a helical segment. Residues 151 to 173 (SRTPAPARPASKQIREPTDTTGG) are disordered. Residues 163–173 (QIREPTDTTGG) show a composition bias toward basic and acidic residues.

The protein belongs to the peptidase A8 family.

The protein resides in the cell inner membrane. The catalysed reaction is Release of signal peptides from bacterial membrane prolipoproteins. Hydrolyzes -Xaa-Yaa-Zaa-|-(S,diacylglyceryl)Cys-, in which Xaa is hydrophobic (preferably Leu), and Yaa (Ala or Ser) and Zaa (Gly or Ala) have small, neutral side chains.. It participates in protein modification; lipoprotein biosynthesis (signal peptide cleavage). Functionally, this protein specifically catalyzes the removal of signal peptides from prolipoproteins. The sequence is that of Lipoprotein signal peptidase from Gloeobacter violaceus (strain ATCC 29082 / PCC 7421).